The primary structure comprises 75 residues: MLIPYDQLEPDTLTRLIEDFVTREGTDNGDETPLQTRVLRVRHALTKGQAVIFFDLESQQCQLMLKHDVPKEFFE.

The protein belongs to the UPF0270 family.

This is UPF0270 protein PSPPH_1506 from Pseudomonas savastanoi pv. phaseolicola (strain 1448A / Race 6) (Pseudomonas syringae pv. phaseolicola (strain 1448A / Race 6)).